Consider the following 51-residue polypeptide: Sperm protamine P1 (51 aa).

It belongs to the protamine P1 family. As to quaternary structure, cross-linked by interchain disulfide bonds around the DNA-helix. As to expression, testis.

It is found in the nucleus. It localises to the chromosome. Its function is as follows. Protamines substitute for histones in the chromatin of sperm during the haploid phase of spermatogenesis. They compact sperm DNA into a highly condensed, stable and inactive complex. The chain is Sperm protamine P1 (PRM1) from Hylobates lar (Lar gibbon).